The following is a 380-amino-acid chain: Probable tRNA-splicing endonuclease subunit sen2 (380 aa).

Active-site residues include Tyr281, His289, and Lys325.

It belongs to the tRNA-intron endonuclease family. In terms of assembly, heterotetramer composed of sen2, sen15, sen34 and sen54. Interacts directly with sen54.

The catalysed reaction is pretRNA = a 3'-half-tRNA molecule with a 5'-OH end + a 5'-half-tRNA molecule with a 2',3'-cyclic phosphate end + an intron with a 2',3'-cyclic phosphate and a 5'-hydroxyl terminus.. Its function is as follows. Constitutes one of the two catalytic subunit of the tRNA-splicing endonuclease complex, a complex responsible for identification and cleavage of the splice sites in pre-tRNA. It cleaves pre-tRNA at the 5'- and 3'-splice sites to release the intron. The products are an intron and two tRNA half-molecules bearing 2',3'-cyclic phosphate and 5'-OH termini. There are no conserved sequences at the splice sites, but the intron is invariably located at the same site in the gene, placing the splice sites an invariant distance from the constant structural features of the tRNA body. This subunit may anchor the endonuclease complex to the nuclear membrane. Probably carries the active site for 5'-splice site cleavage. In Schizosaccharomyces pombe (strain 972 / ATCC 24843) (Fission yeast), this protein is Probable tRNA-splicing endonuclease subunit sen2 (sen2).